Here is a 226-residue protein sequence, read N- to C-terminus: Histone H2B.v1 (226 aa).

A disordered region spans residues 100 to 130 (FNSAKQYPPQPPPAKTATPSSPSSIPAPPIS). Low complexity predominate over residues 114-123 (KTATPSSPSS).

It belongs to the histone H2B family.

The sequence is that of Histone H2B.v1 (H2Bv1) from Dictyostelium discoideum (Social amoeba).